The primary structure comprises 325 residues: Chain length determinant protein (325 aa).

The Cytoplasmic portion of the chain corresponds to 1 to 31; it reads MRVENNNVSGQNHDPEQIDLIDLLVQLWRGK. Residues 32 to 52 traverse the membrane as a helical segment; that stretch reads MTIIISVIVAIALAIGYLAVA. The Periplasmic portion of the chain corresponds to 53–294; sequence KEKWTSTAIV…LPIRRDSPKK (242 aa). The chain crosses the membrane as a helical span at residues 295–315; sequence AITLILAVLLGGMVGAGIVLG. At 316–325 the chain is on the cytoplasmic side; sequence RNALRNYNAK.

Belongs to the WzzB/Cld/Rol family.

The protein localises to the cell inner membrane. Its pathway is bacterial outer membrane biogenesis; lipopolysaccharide biosynthesis. In terms of biological role, confers a modal distribution of chain length on the O-antigen component of lipopolysaccharide (LPS). Gives rise to a reduced number of short chain molecules and increases in numbers of longer molecules. This chain is Chain length determinant protein (wzzB), found in Shigella dysenteriae.